We begin with the raw amino-acid sequence, 380 residues long: All-trans-retinol dehydrogenase [NAD(+)] ADH4 (380 aa).

Cysteine 47 provides a ligand contact to Zn(2+). NAD(+) is bound at residue histidine 48–threonine 49. 5 residues coordinate Zn(2+): histidine 69, cysteine 99, cysteine 102, cysteine 105, and cysteine 113. Residue serine 121 is modified to Phosphoserine. Zn(2+) is bound at residue cysteine 180. Residues glycine 205–glycine 210, aspartate 229, and lysine 234 contribute to the NAD(+) site. Position 278 is a phosphoserine (serine 278). NAD(+) contacts are provided by residues isoleucine 298–valine 300, threonine 323–phenylalanine 325, and arginine 375.

This sequence belongs to the zinc-containing alcohol dehydrogenase family. Class-II subfamily. Homodimer. Zn(2+) serves as cofactor.

Its subcellular location is the cytoplasm. It catalyses the reaction all-trans-retinol + NAD(+) = all-trans-retinal + NADH + H(+). It carries out the reaction 9-cis-retinol + NAD(+) = 9-cis-retinal + NADH + H(+). The catalysed reaction is 20-oxo-(5Z,8Z,11Z,14Z)-eicosatetraenoate + NAD(+) + H2O = (5Z,8Z,11Z,14Z)-eicosatetraenedioate + NADH + 2 H(+). The enzyme catalyses 20-hydroxy-(5Z,8Z,11Z,14Z)-eicosatetraenoate + NAD(+) = 20-oxo-(5Z,8Z,11Z,14Z)-eicosatetraenoate + NADH + H(+). It catalyses the reaction 1,4-benzoquinone + NADH + H(+) = hydroquinone + NAD(+). With respect to regulation, oxydation of 20-HETE is inhibited by low concentrations of N-heptylformamide. Oxydation of 20-HETE is a decreased by 55-65% by either all-trans-retinol or all-trans-retinoic acid. Strongly inhibited by omega-hydroxy fatty acids. Its function is as follows. Catalyzes the NAD-dependent oxidation of either all-trans-retinol or 9-cis-retinol. Also oxidizes long chain omega-hydroxy fatty acids, such as 20-HETE, producing both the intermediate aldehyde, 20-oxoarachidonate and the end product, a dicarboxylic acid, (5Z,8Z,11Z,14Z)-eicosatetraenedioate. Also catalyzes the reduction of benzoquinones. The protein is All-trans-retinol dehydrogenase [NAD(+)] ADH4 of Homo sapiens (Human).